Here is a 555-residue protein sequence, read N- to C-terminus: WRKY transcription factor WRKY24 (555 aa).

Disordered regions lie at residues 38 to 65 (GGGGVSRYKAMTPPSLPLSPPPVSPSSF) and 132 to 248 (QTAP…CTFP). Over residues 51-61 (PSLPLSPPPVS) the composition is skewed to pro residues. A compositionally biased stretch (low complexity) spans 163 to 194 (QQQQQPWGYQQQPAGMDAGANAASFGAAPFQA). Positions 214-278 (SQRRSSDDGY…YKGTHNHAKP (65 aa)) form a DNA-binding region, WRKY 1. A Nuclear localization signal motif is present at residues 253–259 (KKKVERS). The segment at 270–367 (KGTHNHAKPQ…EGISMAGNRT (98 aa)) is disordered. Polar residues-rich tracts occupy residues 277–294 (KPQNTRRNSGSSAAQVLQ) and 310–320 (TAATPENSSAS). Residues 347–356 (DSKRWRKDGD) are compositionally biased toward basic and acidic residues. A DNA-binding region (WRKY 2) is located at residues 379–444 (SDIDILDDGY…YEGKHNHDVP (66 aa)). The tract at residues 466–555 (HPYLPNQPPP…DDMFFQNSLY (90 aa)) is transcription repression of gibberellic acid (GA)-induced promoters. Disordered stretches follow at residues 471–498 (NQPPPMSYQPTGPQPYALRPDGFGGQGP) and 513–555 (GFDD…NSLY).

Belongs to the WRKY group II-a family. Expressed in aleurone cells. Mostly expressed in aleurone layers and leaves, and, to a lower extent, in roots, panicles and embryos.

Its subcellular location is the nucleus. In terms of biological role, transcription repressor. Interacts specifically with the W box (5'-(T)TGAC[CT]-3'), a frequently occurring elicitor-responsive cis-acting element. Negative regulator of both gibberellic acid (GA) and abscisic acid (ABA) signaling in aleurone cells, probably by interfering with GAM1, via the specific repression of GA- and ABA-induced promoters. In Oryza sativa subsp. indica (Rice), this protein is WRKY transcription factor WRKY24.